Here is a 700-residue protein sequence, read N- to C-terminus: Calpain-2 catalytic subunit (700 aa).

Alanine 2 is modified (N-acetylalanine). A propeptide spans 2 to 19 (AGIAAKLAKDREAAEGLG) (anchors to the small subunit). The Calpain catalytic domain occupies 45–344 (LFQDPSFPAL…YSRLEICNLT (300 aa)). Residues glycine 91 and aspartate 96 each coordinate Ca(2+). Cysteine 105 is an active-site residue. Residues glutamate 175, glutamine 229, and lysine 230 each coordinate Ca(2+). Residues histidine 262 and asparagine 286 contribute to the active site. Ca(2+) contacts are provided by glutamate 292, aspartate 299, and glutamate 323. The segment at 345 to 514 (PDTLTSDSYK…KKADYQVVDD (170 aa)) is domain III. Positions 515–529 (EIEANIDEIDISEDD) are linker. The domain IV stretch occupies residues 530-700 (IDDGFRRLFA…LISWLSFSVL (171 aa)). 16 residues coordinate Ca(2+): alanine 542, aspartate 545, glutamate 547, glutamate 552, aspartate 585, aspartate 587, serine 589, lysine 591, glutamate 596, aspartate 615, aspartate 617, serine 619, threonine 621, glutamate 626, aspartate 658, and asparagine 661. EF-hand domains are found at residues 572–597 (FSIETCKIMVDMLDSDGSGKLGLKEF), 602–637 (TKIQKYQKIYREIDVDRSGTMNSYEMRKALEEAGFK), and 652–672 (DDDLIIDFDNFVRCLIRLETL).

The protein belongs to the peptidase C2 family. In terms of assembly, forms a heterodimer with a small (regulatory) subunit (CAPNS1). Interacts with CPEB3; this leads to cleavage of CPEB3. Ca(2+) is required as a cofactor. As to expression, ubiquitous.

It localises to the cytoplasm. It is found in the cell membrane. The enzyme catalyses Broad endopeptidase specificity.. With respect to regulation, activated by 200-1000 micromolar concentrations of calcium and inhibited by calpastatin. Its function is as follows. Calcium-regulated non-lysosomal thiol-protease which catalyzes limited proteolysis of substrates involved in cytoskeletal remodeling and signal transduction. Proteolytically cleaves MYOC at 'Arg-226'. Proteolytically cleaves CPEB3 following neuronal stimulation which abolishes CPEB3 translational repressor activity, leading to translation of CPEB3 target mRNAs. The sequence is that of Calpain-2 catalytic subunit (CAPN2) from Bos taurus (Bovine).